The chain runs to 261 residues: Cytochrome c oxidase subunit 3 (261 aa).

Residues Met-1–Pro-15 lie on the Mitochondrial matrix side of the membrane. Residues Trp-16–Trp-34 form a helical membrane-spanning segment. The Mitochondrial intermembrane portion of the chain corresponds to Phe-35–Pro-40. The chain crosses the membrane as a helical span at residues Leu-41–Thr-66. Residues Phe-67–Thr-72 lie on the Mitochondrial matrix side of the membrane. The helical transmembrane segment at Thr-73–Ser-105 threads the bilayer. Residues Leu-106–Glu-128 are Mitochondrial intermembrane-facing. Residues Val-129–Met-152 form a helical membrane-spanning segment. The Mitochondrial matrix segment spans residues Glu-153–His-155. Residues Arg-156–Glu-183 form a helical membrane-spanning segment. Over Ala-184–Asp-190 the chain is Mitochondrial intermembrane. The chain crosses the membrane as a helical span at residues Gly-191 to Leu-223. The Mitochondrial matrix segment spans residues Lys-224–His-232. The chain crosses the membrane as a helical span at residues Phe-233 to Ile-256. Residues Tyr-257 to Ser-261 lie on the Mitochondrial intermembrane side of the membrane.

It belongs to the cytochrome c oxidase subunit 3 family. In terms of assembly, component of the cytochrome c oxidase (complex IV, CIV), a multisubunit enzyme composed of 14 subunits. The complex is composed of a catalytic core of 3 subunits MT-CO1, MT-CO2 and MT-CO3, encoded in the mitochondrial DNA, and 11 supernumerary subunits COX4I, COX5A, COX5B, COX6A, COX6B, COX6C, COX7A, COX7B, COX7C, COX8 and NDUFA4, which are encoded in the nuclear genome. The complex exists as a monomer or a dimer and forms supercomplexes (SCs) in the inner mitochondrial membrane with NADH-ubiquinone oxidoreductase (complex I, CI) and ubiquinol-cytochrome c oxidoreductase (cytochrome b-c1 complex, complex III, CIII), resulting in different assemblies (supercomplex SCI(1)III(2)IV(1) and megacomplex MCI(2)III(2)IV(2)).

It is found in the mitochondrion inner membrane. It catalyses the reaction 4 Fe(II)-[cytochrome c] + O2 + 8 H(+)(in) = 4 Fe(III)-[cytochrome c] + 2 H2O + 4 H(+)(out). Functionally, component of the cytochrome c oxidase, the last enzyme in the mitochondrial electron transport chain which drives oxidative phosphorylation. The respiratory chain contains 3 multisubunit complexes succinate dehydrogenase (complex II, CII), ubiquinol-cytochrome c oxidoreductase (cytochrome b-c1 complex, complex III, CIII) and cytochrome c oxidase (complex IV, CIV), that cooperate to transfer electrons derived from NADH and succinate to molecular oxygen, creating an electrochemical gradient over the inner membrane that drives transmembrane transport and the ATP synthase. Cytochrome c oxidase is the component of the respiratory chain that catalyzes the reduction of oxygen to water. Electrons originating from reduced cytochrome c in the intermembrane space (IMS) are transferred via the dinuclear copper A center (CU(A)) of subunit 2 and heme A of subunit 1 to the active site in subunit 1, a binuclear center (BNC) formed by heme A3 and copper B (CU(B)). The BNC reduces molecular oxygen to 2 water molecules using 4 electrons from cytochrome c in the IMS and 4 protons from the mitochondrial matrix. The sequence is that of Cytochrome c oxidase subunit 3 (MT-CO3) from Dasypus novemcinctus (Nine-banded armadillo).